Here is a 287-residue protein sequence, read N- to C-terminus: 4-diphosphocytidyl-2-C-methyl-D-erythritol kinase (287 aa).

Lys22 is a catalytic residue. 102 to 112 (PAAAGIGGGSS) lines the ATP pocket. Asp139 is an active-site residue.

It belongs to the GHMP kinase family. IspE subfamily.

It carries out the reaction 4-CDP-2-C-methyl-D-erythritol + ATP = 4-CDP-2-C-methyl-D-erythritol 2-phosphate + ADP + H(+). The protein operates within isoprenoid biosynthesis; isopentenyl diphosphate biosynthesis via DXP pathway; isopentenyl diphosphate from 1-deoxy-D-xylulose 5-phosphate: step 3/6. Catalyzes the phosphorylation of the position 2 hydroxy group of 4-diphosphocytidyl-2C-methyl-D-erythritol. The protein is 4-diphosphocytidyl-2-C-methyl-D-erythritol kinase of Dinoroseobacter shibae (strain DSM 16493 / NCIMB 14021 / DFL 12).